The chain runs to 205 residues: Probable GTP-binding protein EngB (205 aa).

The EngB-type G domain occupies 27 to 201 (EGMEIAFAGR…AAKLDSWFSS (175 aa)). GTP contacts are provided by residues 35–42 (GRSNAGKS), 62–66 (GRTQL), 80–83 (DLPG), 147–150 (TKAD), and 180–182 (FSA). Mg(2+) contacts are provided by serine 42 and threonine 64.

It belongs to the TRAFAC class TrmE-Era-EngA-EngB-Septin-like GTPase superfamily. EngB GTPase family. The cofactor is Mg(2+).

Necessary for normal cell division and for the maintenance of normal septation. The protein is Probable GTP-binding protein EngB of Mannheimia succiniciproducens (strain KCTC 0769BP / MBEL55E).